The sequence spans 581 residues: Membrane protein insertase YidC (581 aa).

The chain crosses the membrane as a helical span at residues 7–27 (ILIVALAVVSYLMVLQWNEDY). Residues 41 to 62 (AATPALPDTPADTASTGGDDIP) form a disordered region. Transmembrane regions (helical) follow at residues 365–385 (TVDY…LEVI), 388–408 (LLGN…LIFF), 458–478 (LGGC…YWVL), 489–509 (WMFW…PIIM), and 536–556 (PIIF…YWVV).

It belongs to the OXA1/ALB3/YidC family. Type 1 subfamily. In terms of assembly, interacts with the Sec translocase complex via SecD. Specifically interacts with transmembrane segments of nascent integral membrane proteins during membrane integration.

The protein resides in the cell inner membrane. Required for the insertion and/or proper folding and/or complex formation of integral membrane proteins into the membrane. Involved in integration of membrane proteins that insert both dependently and independently of the Sec translocase complex, as well as at least some lipoproteins. Aids folding of multispanning membrane proteins. The chain is Membrane protein insertase YidC from Ectopseudomonas mendocina (strain ymp) (Pseudomonas mendocina).